The following is a 106-amino-acid chain: Small ribosomal subunit protein uS10 (106 aa).

It belongs to the universal ribosomal protein uS10 family. In terms of assembly, part of the 30S ribosomal subunit.

Its function is as follows. Involved in the binding of tRNA to the ribosomes. This is Small ribosomal subunit protein uS10 from Synechococcus sp. (strain WH7803).